We begin with the raw amino-acid sequence, 294 residues long: 3-methyl-2-oxobutanoate hydroxymethyltransferase 1 (294 aa).

Aspartate 55 serves as a coordination point for Mg(2+). 3-methyl-2-oxobutanoate is bound by residues 55 to 56 (DS) and lysine 123. The Proton acceptor role is filled by glutamate 192.

This sequence belongs to the PanB family. As to quaternary structure, homodecamer; pentamer of dimers. Mg(2+) serves as cofactor.

Its subcellular location is the cytoplasm. It catalyses the reaction 3-methyl-2-oxobutanoate + (6R)-5,10-methylene-5,6,7,8-tetrahydrofolate + H2O = 2-dehydropantoate + (6S)-5,6,7,8-tetrahydrofolate. It functions in the pathway cofactor biosynthesis; (R)-pantothenate biosynthesis; (R)-pantoate from 3-methyl-2-oxobutanoate: step 1/2. Catalyzes the reversible reaction in which hydroxymethyl group from 5,10-methylenetetrahydrofolate is transferred onto alpha-ketoisovalerate to form ketopantoate. The chain is 3-methyl-2-oxobutanoate hydroxymethyltransferase 1 from Methylibium petroleiphilum (strain ATCC BAA-1232 / LMG 22953 / PM1).